Here is a 100-residue protein sequence, read N- to C-terminus: Small ribosomal subunit protein uS14c (100 aa).

Belongs to the universal ribosomal protein uS14 family. In terms of assembly, part of the 30S ribosomal subunit.

Its subcellular location is the plastid. It is found in the chloroplast. Functionally, binds 16S rRNA, required for the assembly of 30S particles. The protein is Small ribosomal subunit protein uS14c of Porphyra purpurea (Red seaweed).